Reading from the N-terminus, the 271-residue chain is Putative pirin-like protein At3g59260 (271 aa).

Belongs to the pirin family.

The protein resides in the nucleus. The sequence is that of Putative pirin-like protein At3g59260 from Arabidopsis thaliana (Mouse-ear cress).